We begin with the raw amino-acid sequence, 207 residues long: Dephospho-CoA kinase (207 aa).

Positions 1–11 (MTRSPAPSSPT) are enriched in polar residues. The segment at 1–21 (MTRSPAPSSPTHPRRLGLTGS) is disordered. A DPCK domain is found at 15-207 (RLGLTGSIGA…DAALRQLEIT (193 aa)). 23-28 (GAGKST) lines the ATP pocket.

The protein belongs to the CoaE family.

It localises to the cytoplasm. The catalysed reaction is 3'-dephospho-CoA + ATP = ADP + CoA + H(+). Its pathway is cofactor biosynthesis; coenzyme A biosynthesis; CoA from (R)-pantothenate: step 5/5. Its function is as follows. Catalyzes the phosphorylation of the 3'-hydroxyl group of dephosphocoenzyme A to form coenzyme A. The sequence is that of Dephospho-CoA kinase from Deinococcus radiodurans (strain ATCC 13939 / DSM 20539 / JCM 16871 / CCUG 27074 / LMG 4051 / NBRC 15346 / NCIMB 9279 / VKM B-1422 / R1).